The chain runs to 412 residues: N-carbamoyl-L-amino-acid amidohydrolase (412 aa).

The a divalent metal cation site is built by histidine 82, aspartate 93, glutamate 128, and histidine 193. An N-carbamoyl-L-alpha-amino acid is bound by residues glutamine 196, histidine 229, asparagine 278, arginine 291, and glycine 360. The involved in dimerization stretch occupies residues 212 to 330 (SIVGVRALRV…DVDEFFNLSP (119 aa)). Histidine 385 is a binding site for a divalent metal cation.

This sequence belongs to the peptidase M20 family. In terms of assembly, homodimer. The cofactor is Mn(2+). Ni(2+) serves as cofactor. Requires Co(2+) as cofactor. It depends on Fe(2+) as a cofactor.

The catalysed reaction is an N-carbamoyl-L-alpha-amino acid + H2O + 2 H(+) = an L-alpha-amino acid + NH4(+) + CO2. It carries out the reaction N-carbamoyl-L-tryptophan + H2O + 2 H(+) = L-tryptophan + NH4(+) + CO2. The enzyme catalyses N-carbamoyl-L-tyrosine + H2O + 2 H(+) = L-tyrosine + NH4(+) + CO2. It catalyses the reaction N-carbamoyl-L-phenylalanine + H2O + 2 H(+) = L-phenylalanine + NH4(+) + CO2. Catalyzes the hydrolysis of aliphatic N-carbamoyl-L-alpha-amino acids to free L-alpha-amino acids. Is strictly L-specific since it is inactive toward N-carbamoyl-D-alpha-amino acids. Shows a preference for aromatic N-carbamoyl-L-alpha-amino acids, such as N-carbamoyl-L-tryptophan and N-carbamoyl-L-tyrosine and, to a lesser extent, N-carbamoyl-L-phenylalanine and the non-natural amino acid N-carbamoyl-L-thienylalanine. Carbamoyl derivatives of beta-alanine and charged aliphatic amino acids are not accepted as substrates. The polypeptide is N-carbamoyl-L-amino-acid amidohydrolase (Paenarthrobacter aurescens (Arthrobacter aurescens)).